The primary structure comprises 360 residues: Phospho-N-acetylmuramoyl-pentapeptide-transferase (360 aa).

10 consecutive transmembrane segments (helical) span residues 24–44 (RAVMAALTALAFSLMFGPWTI), 69–89 (GTPTMGGSLILTAITVSTLLW), 92–112 (WANPYIWILLGVLLATGALGF), 133–153 (MVWQSSVAIIAGLALFYLAAN), 158–178 (ILIVPFFKQIALPLGVVGFLV), 199–219 (GLATFPVVLVAAGLAIFAYVS), 239–259 (VAIFCTAMCGACLGFLWFNAY), 263–283 (VFMGDVGALALGAALGTVAVI), 288–308 (FVLVIMGGLFVVEAVSVMLQV), and 337–357 (QVVVRFWIITIVLVLIGLSTL).

Belongs to the glycosyltransferase 4 family. MraY subfamily. Requires Mg(2+) as cofactor.

The protein resides in the cell inner membrane. It catalyses the reaction UDP-N-acetyl-alpha-D-muramoyl-L-alanyl-gamma-D-glutamyl-meso-2,6-diaminopimeloyl-D-alanyl-D-alanine + di-trans,octa-cis-undecaprenyl phosphate = di-trans,octa-cis-undecaprenyl diphospho-N-acetyl-alpha-D-muramoyl-L-alanyl-D-glutamyl-meso-2,6-diaminopimeloyl-D-alanyl-D-alanine + UMP. Its pathway is cell wall biogenesis; peptidoglycan biosynthesis. Functionally, catalyzes the initial step of the lipid cycle reactions in the biosynthesis of the cell wall peptidoglycan: transfers peptidoglycan precursor phospho-MurNAc-pentapeptide from UDP-MurNAc-pentapeptide onto the lipid carrier undecaprenyl phosphate, yielding undecaprenyl-pyrophosphoryl-MurNAc-pentapeptide, known as lipid I. The sequence is that of Phospho-N-acetylmuramoyl-pentapeptide-transferase from Neisseria meningitidis serogroup C (strain 053442).